Reading from the N-terminus, the 610-residue chain is Prolactin receptor (610 aa).

The signal sequence occupies residues 1–19 (MPSALAFVLLVLNISLLKG). At 20-229 (QSPPGKPEIH…EMPNDFTLKD (210 aa)) the chain is on the extracellular side. 2 Fibronectin type-III domains span residues 22 to 122 (PPGK…IVEP) and 124 to 224 (PPRN…MPND). C31 and C41 form a disulfide bridge. N-linked (GlcNAc...) asparagine glycosylation occurs at N54. A disulfide bridge connects residues C70 and C81. N99 and N127 each carry an N-linked (GlcNAc...) asparagine glycan. D206 and H207 together coordinate Zn(2+). A WSXWS motif motif is present at residues 210–214 (WSRWS). A helical membrane pass occupies residues 230–253 (TTVWIIVAILSAVICLIMVWAVAL). Over 254–610 (KGYSMMTCIF…DPTCFMHSFH (357 aa)) the chain is Cytoplasmic. Residues 262 to 270 (IFPPVPGPK) carry the Box 1 motif motif. 3 disordered regions span residues 317–355 (DERLMPSHSKEYPGQGVKPTHLDPDSDSGHGSYDSHSLL), 458–482 (TGEEEVAEQKGAKSFPSDKQNTPWP), and 564–584 (AKKAPPSFEADQSEKDLASFT). Residues 318–327 (ERLMPSHSKE) show a composition bias toward basic and acidic residues. Over residues 345 to 354 (GHGSYDSHSL) the composition is skewed to low complexity.

The protein belongs to the type I cytokine receptor family. Type 1 subfamily. In terms of assembly, interacts with SMARCA1. Interacts with NEK3 and VAV2 and this interaction is prolactin-dependent.

It localises to the membrane. This is a receptor for the anterior pituitary hormone prolactin. The chain is Prolactin receptor (Prlr) from Rattus norvegicus (Rat).